The chain runs to 209 residues: Protocatechuate 3,4-dioxygenase alpha chain (209 aa).

R142 is a binding site for 3,4-dihydroxybenzoate.

It belongs to the intradiol ring-cleavage dioxygenase family. In terms of assembly, the enzyme is an oligomer of 12 copies of the alpha and beta chains. It depends on Fe(3+) as a cofactor.

It catalyses the reaction 3,4-dihydroxybenzoate + O2 = 3-carboxy-cis,cis-muconate + 2 H(+). It participates in aromatic compound metabolism; beta-ketoadipate pathway; 3-carboxy-cis,cis-muconate from 3,4-dihydroxybenzoate: step 1/1. In terms of biological role, plays an essential role in the utilization of numerous aromatic and hydroaromatic compounds via the beta-ketoadipate pathway. The chain is Protocatechuate 3,4-dioxygenase alpha chain (pcaG) from Acinetobacter baylyi (strain ATCC 33305 / BD413 / ADP1).